The primary structure comprises 3225 residues: Intermembrane lipid transfer protein VPS13 (3225 aa).

The tract at residues 1 to 1390 (MLEGLVAGLL…VFAADVEQHT (1390 aa)) is involved in phospholipid binding. In terms of domain architecture, Chorein N-terminal spans 2–115 (LEGLVAGLLN…RHRLKMEKLD (114 aa)). Disordered regions lie at residues 1568–1610 (PEAP…QQLV) and 1768–1799 (AGLK…SHSG). A compositionally biased stretch (low complexity) spans 1590 to 1610 (VRVGSSGRHSESSAGSGQQLV). Positions 1777–1799 (GKGTSTLATRTRHASQSAASHSG) are enriched in polar residues. Residues 2290-2570 (FKVTVYSPYV…PYAWDFPAAK (281 aa)) enclose the SHR-BD domain.

It belongs to the VPS13 family.

It is found in the membrane. Mediates the transfer of lipids between membranes at organelle contact sites. Binds phospholipids, including phosphatidylcholine (PC), phosphatidylethanolamine (PE), phosphatidic acid (PA), and phosphatidylserine (PS). May play a role in mitochondrial lipid homeostasis, Golgi vesicle transport, reticulophagy, actin cytoskeleton organization and formation of the prospore membrane. The protein is Intermembrane lipid transfer protein VPS13 of Chaetomium thermophilum (strain DSM 1495 / CBS 144.50 / IMI 039719) (Thermochaetoides thermophila).